The following is a 125-amino-acid chain: MSLPKDLLYTEEHEWVKADDGSYIIGITDFAQDQLGDIVFVELPEVGDTVTKGDSIGSIESVKTVSDFYAPVTGKVVAVNETLEDEPELINSNPYDTGWILKLTEVEEADVTALLSSDDYEKGLD.

A Lipoyl-binding domain is found at 22 to 104; sequence SYIIGITDFA…YDTGWILKLT (83 aa). Lysine 63 carries the post-translational modification N6-lipoyllysine.

This sequence belongs to the GcvH family. As to quaternary structure, the glycine cleavage system is composed of four proteins: P, T, L and H. The cofactor is (R)-lipoate.

The glycine cleavage system catalyzes the degradation of glycine. The H protein shuttles the methylamine group of glycine from the P protein to the T protein. Its function is as follows. Is also involved in protein lipoylation via its role as an octanoyl/lipoyl carrier protein intermediate. In Listeria welshimeri serovar 6b (strain ATCC 35897 / DSM 20650 / CCUG 15529 / CIP 8149 / NCTC 11857 / SLCC 5334 / V8), this protein is Glycine cleavage system H protein.